A 337-amino-acid polypeptide reads, in one-letter code: Biotin synthase (337 aa).

Positions 62–289 constitute a Radical SAM core domain; that stretch reads NAVQLSTLIS…KAMVRLSAGR (228 aa). 3 residues coordinate [4Fe-4S] cluster: cysteine 77, cysteine 81, and cysteine 84. [2Fe-2S] cluster-binding residues include cysteine 121, cysteine 152, cysteine 212, and arginine 284.

It belongs to the radical SAM superfamily. Biotin synthase family. Homodimer. It depends on [4Fe-4S] cluster as a cofactor. Requires [2Fe-2S] cluster as cofactor.

It catalyses the reaction (4R,5S)-dethiobiotin + (sulfur carrier)-SH + 2 reduced [2Fe-2S]-[ferredoxin] + 2 S-adenosyl-L-methionine = (sulfur carrier)-H + biotin + 2 5'-deoxyadenosine + 2 L-methionine + 2 oxidized [2Fe-2S]-[ferredoxin]. It functions in the pathway cofactor biosynthesis; biotin biosynthesis; biotin from 7,8-diaminononanoate: step 2/2. Its function is as follows. Catalyzes the conversion of dethiobiotin (DTB) to biotin by the insertion of a sulfur atom into dethiobiotin via a radical-based mechanism. In Nitrosomonas europaea (strain ATCC 19718 / CIP 103999 / KCTC 2705 / NBRC 14298), this protein is Biotin synthase.